The following is a 1226-amino-acid chain: Probable DNA-binding protein SNT1 (1226 aa).

Disordered stretches follow at residues 1 to 219 and 264 to 331; these read MGYP…YSRS and LKST…PDNI. Over residues 11-27 the composition is skewed to basic residues; it reads GDKKRYHYSNNPNRRHP. The span at 31–64 shows a compositional bias: polar residues; it reads YSKNSFPKSSNNGFVSSPTADNSTNPSVTPSTAS. 2 stretches are compositionally biased toward low complexity: residues 81-103 and 116-131; these read PRPS…SSTR and SSST…NTST. 2 stretches are compositionally biased toward polar residues: residues 132-143 and 150-170; these read ITHTNTDIGNSR and SRYN…SALS. Position 187 is a phosphoserine (serine 187). Low complexity predominate over residues 202-211; it reads NNVSSVNNNS. The span at 264 to 275 shows a compositional bias: polar residues; sequence LKSTHSQSSPSL. The span at 280 to 304 shows a compositional bias: basic and acidic residues; that stretch reads FHDANKLDKPEASVKVETPSKDETK. Serine 395 bears the Phosphoserine mark. A coiled-coil region spans residues 539 to 591; the sequence is DLQKKYEKECEILTKLSENLRKEEIENKRKEHELMEQKRREEGIETEKEKSLR. The segment covering 569–590 has biased composition (basic and acidic residues); that stretch reads EHELMEQKRREEGIETEKEKSL. A disordered region spans residues 569–605; it reads EHELMEQKRREEGIETEKEKSLRHPSSSSSSRRRNRA. In terms of domain architecture, SANT spans 668–720; that stretch reads DASDNFTDHEHSLFLEGYLIHPKKFGKISHYMGGLRSPEECVLHYYRTKKTVN. Basic residues predominate over residues 732–745; sequence RKMSAAAKRRKRKE. Residues 732–796 are disordered; it reads RKMSAAAKRR…SEVKGDPLGT (65 aa). Positions 748–758 are enriched in acidic residues; the sequence is NDEEVEVDESK. Residues 759–773 show a composition bias toward basic and acidic residues; the sequence is EESTNTIEKEEKSEN. A Phosphothreonine modification is found at threonine 796. The region spanning 884–938 is the HTH myb-type domain; it reads APEHKTSYWSVRESQLFPELLKEFGSQWSLISEKLGTKSTTMVRNYYQRNAARNG. The H-T-H motif DNA-binding region spans 911–934; it reads WSLISEKLGTKSTTMVRNYYQRNA. The residue at position 1037 (serine 1037) is a Phosphoserine. The interval 1172–1194 is disordered; that stretch reads SQGTPTFPLPAPRTSPISRAPPK.

As to quaternary structure, identified in a Set3C complex with SET3, HST1, HOS2, SIF2, CPR1 and HOS4.

The protein localises to the nucleus. Functionally, part of the Set3C complex, which is required to repress early/middle sporulation genes during meiosis. The chain is Probable DNA-binding protein SNT1 (SNT1) from Saccharomyces cerevisiae (strain ATCC 204508 / S288c) (Baker's yeast).